The sequence spans 359 residues: DNA integrity scanning protein DisA (359 aa).

A DAC domain is found at 10-148; sequence ELDLLDIVQF…GNRRYTLKDI (139 aa). Residues Gly77, Leu95, and 108 to 112 contribute to the ATP site; that span reads MRHRT.

The protein belongs to the DisA family. As to quaternary structure, homooctamer. The cofactor is Mg(2+).

It catalyses the reaction 2 ATP = 3',3'-c-di-AMP + 2 diphosphate. Its function is as follows. Participates in a DNA-damage check-point that is active prior to asymmetric division when DNA is damaged. DisA forms globular foci that rapidly scan along the chromosomes during sporulation, searching for lesions. When a lesion is present, DisA pauses at the lesion site. This triggers a cellular response that culminates in a temporary block in sporulation initiation. Also has diadenylate cyclase activity, catalyzing the condensation of 2 ATP molecules into cyclic di-AMP (c-di-AMP). c-di-AMP acts as a signaling molecule that couples DNA integrity with progression of sporulation. The rise in c-di-AMP level generated by DisA while scanning the chromosome, operates as a positive signal that advances sporulation; upon encountering a lesion, the DisA focus arrests at the damaged site and halts c-di-AMP synthesis. The protein is DNA integrity scanning protein DisA of Bacillus pumilus (strain SAFR-032).